Consider the following 181-residue polypeptide: Oligoribonuclease (181 aa).

The 164-residue stretch at 8-171 folds into the Exonuclease domain; it reads LVWIDMEMTG…DDIRESIAEL (164 aa). Residue Y129 is part of the active site.

Belongs to the oligoribonuclease family.

The protein resides in the cytoplasm. Functionally, 3'-to-5' exoribonuclease specific for small oligoribonucleotides. The polypeptide is Oligoribonuclease (Aeromonas hydrophila subsp. hydrophila (strain ATCC 7966 / DSM 30187 / BCRC 13018 / CCUG 14551 / JCM 1027 / KCTC 2358 / NCIMB 9240 / NCTC 8049)).